Consider the following 1086-residue polypeptide: Selenocysteine insertion sequence-binding protein 2-like (1086 aa).

Disordered regions lie at residues Gly-155 to Ser-207, Ala-243 to Leu-386, Gln-615 to Ala-657, Ser-880 to Arg-904, and Ala-919 to Thr-1086. Over residues Asn-193 to Asp-206 the composition is skewed to polar residues. A Phosphoserine modification is found at Ser-276. Polar residues-rich tracts occupy residues Gly-294 to Gly-303 and Gln-328 to Gln-344. A compositionally biased stretch (basic and acidic residues) spans Ser-355–His-370. The span at Ser-624–Ala-657 shows a compositional bias: polar residues. The span at Ser-922–Lys-931 shows a compositional bias: polar residues. Positions Thr-933–Asp-943 are enriched in basic and acidic residues. Polar residues predominate over residues Ala-947 to Leu-957. The segment covering Leu-981–Tyr-994 has biased composition (acidic residues). Over residues Gln-1004 to Thr-1022 the composition is skewed to polar residues. Acidic residues predominate over residues Ser-1032–Glu-1046.

Functionally, binds SECIS (Sec insertion sequence) elements present on selenocysteine (Sec) protein mRNAs, but does not promote Sec incorporation into selenoproteins. This is Selenocysteine insertion sequence-binding protein 2-like (Secisbp2l) from Mus musculus (Mouse).